Consider the following 293-residue polypeptide: Small ribosomal subunit protein uS3 (293 aa).

In terms of domain architecture, KH type-2 spans 39 to 107 (VREYLKAKLK…PVAVNIEEVR (69 aa)). The tract at residues 210–293 (RNDLPAVETP…PATAADGKGE (84 aa)) is disordered. Positions 219–238 (PRPEEERRPRGPRRDGRPGG) are enriched in basic and acidic residues.

It belongs to the universal ribosomal protein uS3 family. In terms of assembly, part of the 30S ribosomal subunit. Forms a tight complex with proteins S10 and S14.

Its function is as follows. Binds the lower part of the 30S subunit head. Binds mRNA in the 70S ribosome, positioning it for translation. The protein is Small ribosomal subunit protein uS3 of Paracidovorax citrulli (strain AAC00-1) (Acidovorax citrulli).